Reading from the N-terminus, the 102-residue chain is Large ribosomal subunit protein bL21 (102 aa).

It belongs to the bacterial ribosomal protein bL21 family. Part of the 50S ribosomal subunit. Contacts protein L20.

This protein binds to 23S rRNA in the presence of protein L20. This chain is Large ribosomal subunit protein bL21, found in Bacillus subtilis (strain 168).